The primary structure comprises 358 residues: tRNA (guanine-N(7)-)-methyltransferase (358 aa).

A disordered region spans residues 1-29 (MTPPPPKRQKRDEYRKATAEATSQSGASD). Residues G99 and 122-123 (EI) each bind S-adenosyl-L-methionine. Over residues 151-186 (TATAASETPSQQQAQIDGKQANANAAADAASPAPST) the composition is skewed to low complexity. The disordered stretch occupies residues 151–194 (TATAASETPSQQQAQIDGKQANANAAADAASPAPSTDTEHMPTT). S-adenosyl-L-methionine is bound by residues 209–210 (NT) and C229. The active site involves D232. 330–332 (TEE) contacts S-adenosyl-L-methionine.

Belongs to the class I-like SAM-binding methyltransferase superfamily. TrmB family. In terms of assembly, forms a complex with trm82.

The protein resides in the nucleus. The catalysed reaction is guanosine(46) in tRNA + S-adenosyl-L-methionine = N(7)-methylguanosine(46) in tRNA + S-adenosyl-L-homocysteine. Its pathway is tRNA modification; N(7)-methylguanine-tRNA biosynthesis. Its function is as follows. Catalyzes the formation of N(7)-methylguanine at position 46 (m7G46) in tRNA. The polypeptide is tRNA (guanine-N(7)-)-methyltransferase (trm8) (Aspergillus fumigatus (strain ATCC MYA-4609 / CBS 101355 / FGSC A1100 / Af293) (Neosartorya fumigata)).